The sequence spans 427 residues: MGLQLRALLGAFGRWTLRLGPRPSCSPRMAGNAEPPPAGAACPQDRRSCSGRAGGDRVWEDGEHPAKKLKSGGDEERREKPPKRKIVLLMAYSGKGYHGMQRNVGSSQFKTIEDDLVSALVRSGCIPENHGEDMRKMSFQRCARTDKGVSAAGQVVSLKVWLIDDILEKINSHLPSHIRILGLKRVTGGFNSKNRCDARTYCYLLPTFAFAHKDRDVQDETYRLSAETLQQVNRLLACYKGTHNFHNFTSQKGPQDPSACRYILEMYCEEPFVREGLEFAVIRVKGQSFMMHQIRKMVGLVVAIVKGYAPESVLERSWGTEKVDVPKAPGLGLVLERVHFEKYNQRFGNDGLHEPLDWAQEEGKVAAFKEEHIYPTIIGTERDERSMAQWLSTLPIHNFSATALTAGGTGAKVPSPLEGSEGDGDTD.

The interval 20–83 is disordered; the sequence is GPRPSCSPRM…DEERREKPPK (64 aa). Residues 44 to 79 show a composition bias toward basic and acidic residues; that stretch reads QDRRSCSGRAGGDRVWEDGEHPAKKLKSGGDEERRE. Asp146 (nucleophile) is an active-site residue. Residues 407 to 427 are disordered; the sequence is GGTGAKVPSPLEGSEGDGDTD. Phosphoserine is present on residues Ser415 and Ser420. At Thr426 the chain carries Phosphothreonine.

Belongs to the tRNA pseudouridine synthase TruA family. As to quaternary structure, monomer. Forms a complex with RARG and the SRA1 RNA in the nucleus. As to expression, widely expressed. High levels of expression found in brain and skeletal muscle.

Its subcellular location is the mitochondrion. It localises to the nucleus. It is found in the cytoplasm. It catalyses the reaction a uridine in tRNA = a pseudouridine in tRNA. The catalysed reaction is uridine(38/39/40) in tRNA = pseudouridine(38/39/40) in tRNA. It carries out the reaction a uridine in mRNA = a pseudouridine in mRNA. Pseudouridylate synthase that catalyzes pseudouridylation of tRNAs and mRNAs. Acts on positions 27/28 in the anticodon stem and also positions 34 and 36 in the anticodon of an intron containing tRNA. Also catalyzes pseudouridylation of mRNAs: mediates pseudouridylation of mRNAs with the consensus sequence 5'-UGUAG-3'. Acts as a regulator of pre-mRNA splicing by mediating pseudouridylation of pre-mRNAs at locations associated with alternatively spliced regions. Pseudouridylation of pre-mRNAs near splice sites directly regulates mRNA splicing and mRNA 3'-end processing. Involved in regulation of nuclear receptor activity through pseudouridylation of SRA1 mRNA. The protein is Pseudouridylate synthase 1 homolog of Homo sapiens (Human).